Here is a 541-residue protein sequence, read N- to C-terminus: ATP synthase subunit alpha (541 aa).

An ATP-binding site is contributed by 169 to 176; the sequence is GDRQTGKT. Residues 506–541 are disordered; sequence NTLLNVEEGDTGEEENNEGHNKAEQDTEEKDTEEVV. 2 stretches are compositionally biased toward acidic residues: residues 512–521 and 531–541; these read EEGDTGEEEN and DTEEKDTEEVV.

The protein belongs to the ATPase alpha/beta chains family. F-type ATPases have 2 components, CF(1) - the catalytic core - and CF(0) - the membrane proton channel. CF(1) has five subunits: alpha(3), beta(3), gamma(1), delta(1), epsilon(1). CF(0) has three main subunits: a(1), b(2) and c(9-12). The alpha and beta chains form an alternating ring which encloses part of the gamma chain. CF(1) is attached to CF(0) by a central stalk formed by the gamma and epsilon chains, while a peripheral stalk is formed by the delta and b chains.

Its subcellular location is the cell inner membrane. It catalyses the reaction ATP + H2O + 4 H(+)(in) = ADP + phosphate + 5 H(+)(out). Functionally, produces ATP from ADP in the presence of a proton gradient across the membrane. The alpha chain is a regulatory subunit. The polypeptide is ATP synthase subunit alpha (Halothermothrix orenii (strain H 168 / OCM 544 / DSM 9562)).